Here is a 131-residue protein sequence, read N- to C-terminus: Transcription antitermination protein NusB (131 aa).

Belongs to the NusB family.

Functionally, involved in transcription antitermination. Required for transcription of ribosomal RNA (rRNA) genes. Binds specifically to the boxA antiterminator sequence of the ribosomal RNA (rrn) operons. In Campylobacter curvus (strain 525.92), this protein is Transcription antitermination protein NusB.